The sequence spans 410 residues: Arginine deiminase (410 aa).

Catalysis depends on cysteine 400, which acts as the Amidino-cysteine intermediate.

The protein belongs to the arginine deiminase family.

The protein localises to the cytoplasm. It catalyses the reaction L-arginine + H2O = L-citrulline + NH4(+). Its pathway is amino-acid degradation; L-arginine degradation via ADI pathway; carbamoyl phosphate from L-arginine: step 1/2. This Bacillus thuringiensis subsp. konkukian (strain 97-27) protein is Arginine deiminase.